The sequence spans 349 residues: Divinyl chlorophyll a/b light-harvesting protein PcbE (349 aa).

Transmembrane regions (helical) follow at residues 27 to 47 (FIAA…GSTL), 65 to 85 (IFLA…AWTG), 88 to 108 (VASI…GGLL), 201 to 221 (VLGG…FHIA), 241 to 261 (AILS…AFWC), and 308 to 328 (LANV…WHAL).

This sequence belongs to the PsbB/PsbC family. IsiA/Pcb subfamily. As to quaternary structure, the antenna complex consists of divinyl chlorophylls (a and b) and divinyl chlorophyll a/b binding proteins and binds more divinyl chlorophyll b than does the antenna complex from high-light-adapted Prochlorococcus. It depends on divinyl chlorophyll a as a cofactor. Divinyl chlorophyll b is required as a cofactor.

The protein localises to the cellular thylakoid membrane. Its function is as follows. The antenna complex functions as a light receptor, it captures and delivers excitation energy to photosystems II and I. The Prochlorales pcb genes are not related to higher plant LHCs. This is Divinyl chlorophyll a/b light-harvesting protein PcbE (pcbE) from Prochlorococcus marinus (strain NATL2A).